A 547-amino-acid polypeptide reads, in one-letter code: Putative cysteine ligase BshC (547 aa).

Positions 461 to 504 (ASTEATRSAIMDEMEALKQKVVRAEKRQQDEVRAQLKKAHTNLR) form a coiled coil.

It belongs to the BshC family.

This is Putative cysteine ligase BshC from Salinibacter ruber (strain DSM 13855 / M31).